We begin with the raw amino-acid sequence, 549 residues long: E-selectin (549 aa).

Residues 1 to 21 (MNASCFLSALTFVLLIGKSIA) form the signal peptide. The region spanning 22 to 139 (WYYNASSELM…CDKKKLALCY (118 aa)) is the C-type lectin domain. Residues 22-494 (WYYNASSELM…CEAPANPPRP (473 aa)) are Extracellular-facing. 2 N-linked (GlcNAc...) asparagine glycosylation sites follow: Asn-25 and Asn-60. 17 disulfide bridges follow: Cys-40-Cys-138, Cys-111-Cys-130, Cys-143-Cys-154, Cys-148-Cys-163, Cys-165-Cys-174, Cys-180-Cys-225, Cys-193-Cys-206, Cys-210-Cys-238, Cys-243-Cys-287, Cys-256-Cys-269, Cys-273-Cys-300, Cys-305-Cys-350, Cys-336-Cys-363, Cys-368-Cys-413, Cys-399-Cys-426, Cys-431-Cys-472, and Cys-458-Cys-485. Ca(2+) is bound by residues Glu-101, Asn-103, and Glu-109. Residues 101–109 (EPNNKQRNE), 113–118 (EIYIQR), and 126–128 (NDE) each bind a carbohydrate. Ca(2+) contacts are provided by Asn-126 and Asp-127. Residues 140-175 (TASCTNTSCSGHGECVETINSYTCKCHPGFLGPKCD) form the EGF-like domain. N-linked (GlcNAc...) asparagine glycosylation is present at Asn-145. 5 Sushi domains span residues 178 to 240 (VTCQ…ACHV), 241 to 302 (VECK…SCKA), 303 to 365 (VTCD…VCKA), 366 to 428 (SQCE…TCAG), and 429 to 487 (VQCS…TCEA). N-linked (GlcNAc...) asparagine glycans are attached at residues Asn-192 and Asn-203. A glycan (N-linked (GlcNAc...) asparagine) is linked at Asn-266. Asn-313, Asn-320, and Asn-333 each carry an N-linked (GlcNAc...) asparagine glycan. Asn-441 and Asn-465 each carry an N-linked (GlcNAc...) asparagine glycan. Residues 495–516 (LVVALSVAATSLLTLSSLIYVL) form a helical membrane-spanning segment. At 517-549 (KRFFWKKAKKFVPASSCQSLQSFENYQGPSYII) the chain is on the cytoplasmic side.

This sequence belongs to the selectin/LECAM family. As to quaternary structure, interacts with SELPLG/PSGL1 and PODXL2 through the sialyl Lewis X epitope. SELPLG sulfation appears not to be required for this interaction.

Its subcellular location is the cell membrane. In terms of biological role, cell-surface glycoprotein having a role in immunoadhesion. Mediates in the adhesion of blood neutrophils in cytokine-activated endothelium through interaction with SELPLG/PSGL1. May have a role in capillary morphogenesis. This is E-selectin (Sele) from Rattus norvegicus (Rat).